Here is a 210-residue protein sequence, read N- to C-terminus: MAVKIKICGITSLADAWAAHDAGADAMGLVFYPGSPRAVTPQQVAQWRGDLPPFMTVVGLFVNATAQWIASTTALCSLDRIQLHGDESPAQCRAWGARAIRAIRVAEAADLHDLARWPVGALLLDAKIKGSYGGTGACFDWQLLGQAELPKPWILAGGLDPDNVEAAVRQVQPYGVDVSSGVESAPGKKDHNKMHRFVAAVRRAQDGAGL.

This sequence belongs to the TrpF family.

The catalysed reaction is N-(5-phospho-beta-D-ribosyl)anthranilate = 1-(2-carboxyphenylamino)-1-deoxy-D-ribulose 5-phosphate. Its pathway is amino-acid biosynthesis; L-tryptophan biosynthesis; L-tryptophan from chorismate: step 3/5. The protein is N-(5'-phosphoribosyl)anthranilate isomerase of Magnetococcus marinus (strain ATCC BAA-1437 / JCM 17883 / MC-1).